Reading from the N-terminus, the 69-residue chain is DNA-directed RNA polymerase subunit epsilon (69 aa).

Belongs to the RNA polymerase subunit epsilon family. As to quaternary structure, RNAP is composed of a core of 2 alpha, a beta and a beta' subunit. The core is associated with a delta subunit, and at least one of epsilon or omega. When a sigma factor is associated with the core the holoenzyme is formed, which can initiate transcription.

The enzyme catalyses RNA(n) + a ribonucleoside 5'-triphosphate = RNA(n+1) + diphosphate. A non-essential component of RNA polymerase (RNAP). The protein is DNA-directed RNA polymerase subunit epsilon of Halalkalibacterium halodurans (strain ATCC BAA-125 / DSM 18197 / FERM 7344 / JCM 9153 / C-125) (Bacillus halodurans).